The primary structure comprises 84 residues: Large ribosomal subunit protein bL27 (84 aa).

Positions 1–22 (MAHKKAGGSTRNGRDSESKRLG) are disordered.

It belongs to the bacterial ribosomal protein bL27 family.

The sequence is that of Large ribosomal subunit protein bL27 from Shewanella pealeana (strain ATCC 700345 / ANG-SQ1).